Here is a 1331-residue protein sequence, read N- to C-terminus: uncharacterized protein (1331 aa).

Helical transmembrane passes span 373-393 (VIGV…SLIV), 487-507 (ALFL…LILI), 534-554 (LLIF…SFGI), 579-599 (VVGL…ISLL), 653-673 (LVFL…SFAT), 1206-1226 (VIAV…TTLI), 1255-1275 (IPLF…LIAL), and 1297-1317 (AIGS…LNWL).

It belongs to the ABC-4 integral membrane protein family.

The protein resides in the cell membrane. This is an uncharacterized protein from Mycoplasma genitalium (strain ATCC 33530 / DSM 19775 / NCTC 10195 / G37) (Mycoplasmoides genitalium).